A 220-amino-acid chain; its full sequence is Cell division protein DedD (220 aa).

Residues 9–29 (LVGTIVLVALGVIVLPGLLDG) traverse the membrane as a helical segment. 2 disordered regions span residues 46–84 (KAGD…AAPS) and 97–137 (FEPE…EEKA). Residues 57–70 (PAATQALPTQPPEG) show a composition bias toward low complexity. Residues 100 to 109 (EPAPVAPPKP) show a composition bias toward pro residues. Basic and acidic residues-rich tracts occupy residues 110 to 119 (KPVEPPKPKV) and 127 to 137 (PEPKPVVEEKA). The region spanning 138–217 (APTGKAYVVQ…SGLSGVVMGY (80 aa)) is the SPOR domain.

The protein belongs to the DedD family.

It localises to the cell inner membrane. In terms of biological role, non-essential cell division protein that could be required for efficient cell constriction. The polypeptide is Cell division protein DedD (Escherichia coli (strain K12)).